A 390-amino-acid chain; its full sequence is MAVSESQLKKMVSKYKYRDLTVRETVNVITLYKDLKPVLDSYVFNDGSSRELMNLTGTIPVPYRGNTYNIPICLWLLDTYPYNPPICFVKPTSSMTIKTGKHVDANGKIYLPYLHEWKHPQSDLLGLIQVMIVVFGDEPPVFSRPISASYPPYQATGPPNTSYMPGMPGGISPYPSGYPPNPSGYPGCPYPPGGPYPATTSSQYPSQPPVTTVGPSRDGTISEDTIRASLISAVSDKLRWRMKEEMDRAQAELNALKRTEEDLKKGHQKLEEMVTRLDQEVAEVDKNIELLKKKDEELSSALEKMENQSENNDIDEVIIPTAPLYKQILNLYAEENAIEDTIFYLGEALRRGVIDLDVFLKHVRLLSRKQFQLRALMQKARKTAGLSDLY.

Position 2 is an N-acetylalanine (Ala2). A UEV domain is found at Ala2 to Pro145. The tract at residues Pro158–Ser162 is interaction with CEP55. Positions Ala198 to Gly214 are enriched in polar residues. Residues Ala198–Thr220 are disordered. The residue at position 220 (Thr220) is a Phosphothreonine. Positions Ser235–Glu316 form a coiled coil. The PTAP motif motif lies at Pro320 to Pro323. Positions Ala322 to Tyr390 constitute an SB domain.

This sequence belongs to the ubiquitin-conjugating enzyme family. UEV subfamily. Component of the ESCRT-I complex (endosomal sorting complex required for transport I) which consists of TSG101, VPS28, a VPS37 protein (VPS37A to -D) and MVB12A or MVB12B in a 1:1:1:1 stoichiometry. Interacts with VPS37A, VPS37B and VPS37C. Interacts with DMAP1. Interacts with ubiquitin. Interacts with stathmin, GMCL and AATF. Component of an ESCRT-I complex (endosomal sorting complex required for transport I) which consists of TSG101, VPS28, VPS37A and UBAP1 in a 1:1:1:1 stoichiometry. Interacts with HGS; the interaction mediates the association with the ESCRT-0 complex. Interacts with GGA1 and GGA3. Interacts (via UEV domain) with PDCD6IP/AIP1. Interacts with VPS28, SNF8 and VPS36. Self-associates. Interacts with MVB12A; the association appears to be mediated by the TSG101-VPS37 binary subcomplex. Interacts with VPS37D. Interacts with LRSAM1. Interacts with CEP55; the interaction is required for cytokinesis but not for viral budding. Interacts with PDCD6. Interacts with LITAF. Interacts with MGRN1. Interacts with ARRDC1; recruits TSG101 to the plasma membrane. As to quaternary structure, (Microbial infection) Interacts with HIV-1 p6. In terms of assembly, (Microbial infection) Interacts with human spumavirus Gag. (Microbial infection) Interacts with HTLV-1 Gag. As to quaternary structure, (Microbial infection) Interacts with Ebola virus VP40. In terms of assembly, (Microbial infection) Interacts with EIAV p9; the interaction has been shown in vitro. (Microbial infection) Interacts with Lassa virus protein Z. As to quaternary structure, (Microbial infection) Interacts with hepatitis E virus protein ORF3. In terms of processing, monoubiquitinated at multiple sites by LRSAM1 and by MGRN1. Ubiquitination inactivates it, possibly by regulating its shuttling between an active membrane-bound protein and an inactive soluble form. Ubiquitination by MGRN1 requires the presence of UBE2D1. Heart, brain, placenta, lung, liver, skeletal, kidney and pancreas.

The protein localises to the cytoplasm. It is found in the early endosome membrane. Its subcellular location is the late endosome membrane. The protein resides in the cytoskeleton. It localises to the microtubule organizing center. The protein localises to the centrosome. It is found in the midbody. Its subcellular location is the midbody ring. The protein resides in the nucleus. Its function is as follows. Component of the ESCRT-I complex, a regulator of vesicular trafficking process. Binds to ubiquitinated cargo proteins and is required for the sorting of endocytic ubiquitinated cargos into multivesicular bodies (MVBs). Mediates the association between the ESCRT-0 and ESCRT-I complex. Required for completion of cytokinesis; the function requires CEP55. May be involved in cell growth and differentiation. Acts as a negative growth regulator. Involved in the budding of many viruses through an interaction with viral proteins that contain a late-budding motif P-[ST]-A-P. This interaction is essential for viral particle budding of numerous retroviruses. Required for the exosomal release of SDCBP, CD63 and syndecan. It may also play a role in the extracellular release of microvesicles that differ from the exosomes. The chain is Tumor susceptibility gene 101 protein (TSG101) from Homo sapiens (Human).